The chain runs to 143 residues: MSGDRDDKRYPYPKDDAELRRRLTPMQYEVTQHAATERPFTGEYTDTEDAGIYHCVVCGTALFESGAKYHSGCGWPSYFKPIDAEVIDEKMDYTHGMTRVEVRCNQCGAHLGHVFEDGPRDKTGLRYCINSAALNFEAKPEWK.

Positions 16–139 constitute a MsrB domain; that stretch reads DAELRRRLTP…NSAALNFEAK (124 aa). Residues C55, C58, C104, and C107 each contribute to the Zn(2+) site. The active-site Nucleophile is the C128.

It belongs to the MsrB Met sulfoxide reductase family. Requires Zn(2+) as cofactor.

It catalyses the reaction L-methionyl-[protein] + [thioredoxin]-disulfide + H2O = L-methionyl-(R)-S-oxide-[protein] + [thioredoxin]-dithiol. This chain is Peptide methionine sulfoxide reductase MsrB, found in Burkholderia thailandensis (strain ATCC 700388 / DSM 13276 / CCUG 48851 / CIP 106301 / E264).